The chain runs to 226 residues: uncharacterized protein (226 aa).

The N-terminal stretch at 1-18 (MRRIGLCISLLVTVLVMS) is a signal peptide.

This is an uncharacterized protein from Bacillus subtilis (strain 168).